Here is a 97-residue protein sequence, read N- to C-terminus: Secreted Ly-6/uPAR domain-containing protein 2 (97 aa).

An N-terminal signal peptide occupies residues 1–22 (MQFHTGLLLAAVLSLQLAAAQA). Residues 23–95 (LWCHQCTGFG…IACCQTSLCN (73 aa)) form the UPAR/Ly6 domain. Intrachain disulfides connect Cys25–Cys47, Cys28–Cys34, Cys40–Cys68, Cys72–Cys88, and Cys89–Cys94.

As to quaternary structure, interacts with CHRNA3, CHRNA4, CHRNA5, CHRNA7, CHRNB2 and CHRNB4. Interacts with CHRM1 and CHRM3 probably in an allosteric manner.

The protein resides in the secreted. In terms of biological role, binds and may modulate the functional properties of nicotinic and muscarinic acetylcholine receptors. May regulate keratinocytes proliferation, differentiation and apoptosis. In vitro moderately inhibits ACh-evoked currents of alpha-3:beta-2-containing nAChRs, strongly these of alpha-4:beta-2-containing nAChRs, modulates alpha-7-containing nAChRs, and inhibits nicotine-induced signaling probably implicating alpha-3:beta-4-containing nAChRs. Proposed to act on alpha-3:beta-2 and alpha-7 nAChRs in an orthosteric, and on mAChRs, such as CHRM1 and CHRM3, in an allosteric manner. In Macaca mulatta (Rhesus macaque), this protein is Secreted Ly-6/uPAR domain-containing protein 2.